The chain runs to 162 residues: Phycoerythrocyanin alpha chain (162 aa).

Residue Cys-84 participates in (15Z)-phycoviolobilin binding.

This sequence belongs to the phycobiliprotein family. As to quaternary structure, heterodimer of an alpha and a beta chain. Contains one covalently linked bilin chromophore.

The protein localises to the cellular thylakoid membrane. Light-harvesting photosynthetic bile pigment-protein from the phycobiliprotein complex. The sequence is that of Phycoerythrocyanin alpha chain (pecA) from Nostoc sp. (strain PCC 7120 / SAG 25.82 / UTEX 2576).